Here is a 193-residue protein sequence, read N- to C-terminus: Holliday junction branch migration complex subunit RuvA (193 aa).

Positions 1–64 (MIGRIAGTLI…EDAHLLYGFG (64 aa)) are domain I. Residues 65–143 (TASERNTFRE…AELGHVPGTP (79 aa)) are domain II. The flexible linker stretch occupies residues 144–151 (AVPDSAVD). The domain III stretch occupies residues 151–193 (DVLNALLALGYSEKEAAAAIKQVPAGTGVSDGIKLALKALSKA).

The protein belongs to the RuvA family. In terms of assembly, homotetramer. Forms an RuvA(8)-RuvB(12)-Holliday junction (HJ) complex. HJ DNA is sandwiched between 2 RuvA tetramers; dsDNA enters through RuvA and exits via RuvB. An RuvB hexamer assembles on each DNA strand where it exits the tetramer. Each RuvB hexamer is contacted by two RuvA subunits (via domain III) on 2 adjacent RuvB subunits; this complex drives branch migration. In the full resolvosome a probable DNA-RuvA(4)-RuvB(12)-RuvC(2) complex forms which resolves the HJ.

The protein localises to the cytoplasm. Functionally, the RuvA-RuvB-RuvC complex processes Holliday junction (HJ) DNA during genetic recombination and DNA repair, while the RuvA-RuvB complex plays an important role in the rescue of blocked DNA replication forks via replication fork reversal (RFR). RuvA specifically binds to HJ cruciform DNA, conferring on it an open structure. The RuvB hexamer acts as an ATP-dependent pump, pulling dsDNA into and through the RuvAB complex. HJ branch migration allows RuvC to scan DNA until it finds its consensus sequence, where it cleaves and resolves the cruciform DNA. The chain is Holliday junction branch migration complex subunit RuvA from Cupriavidus necator (strain ATCC 17699 / DSM 428 / KCTC 22496 / NCIMB 10442 / H16 / Stanier 337) (Ralstonia eutropha).